A 1038-amino-acid chain; its full sequence is Translation initiation factor IF-2 (1038 aa).

Residues 32 to 442 (GSALASLSDE…RKGVNTAAPR (411 aa)) are disordered. Low complexity-rich tracts occupy residues 65–77 (PPTKDTPTAPVAP), 100–113 (PAEAADNPNAPAQP), and 131–147 (PKLAPAPEAKAPEAPAA). 2 stretches are compositionally biased toward basic and acidic residues: residues 204–217 (SGGRKAPESPKRES) and 275–295 (RSLDRSRNRPEEAAKAGDAGK). The span at 311–328 (PSAPAKPAAPTGSSGPAA) shows a compositional bias: low complexity. Positions 331 to 344 (PDIKLTRDVIEGHK) are enriched in basic and acidic residues. Basic residues predominate over residues 422 to 435 (HHYRRSRPRIRRKG). The tr-type G domain maps to 529–696 (ARPPVVTFLG…TLLTIAELNE (168 aa)). The G1 stretch occupies residues 538–545 (GHVDHGKT). Position 538–545 (538–545 (GHVDHGKT)) interacts with GTP. The segment at 563 to 567 (GITQH) is G2. The interval 584 to 587 (DTPG) is G3. GTP is bound by residues 584–588 (DTPGH) and 638–641 (NKID). Residues 638 to 641 (NKID) are G4. Residues 674 to 676 (SAT) are G5.

This sequence belongs to the TRAFAC class translation factor GTPase superfamily. Classic translation factor GTPase family. IF-2 subfamily.

The protein localises to the cytoplasm. Functionally, one of the essential components for the initiation of protein synthesis. Protects formylmethionyl-tRNA from spontaneous hydrolysis and promotes its binding to the 30S ribosomal subunits. Also involved in the hydrolysis of GTP during the formation of the 70S ribosomal complex. The polypeptide is Translation initiation factor IF-2 (Rhodopirellula baltica (strain DSM 10527 / NCIMB 13988 / SH1)).